We begin with the raw amino-acid sequence, 150 residues long: Aspartate 1-decarboxylase 1 (150 aa).

The active-site Schiff-base intermediate with substrate; via pyruvic acid is the S24. S24 carries the pyruvic acid (Ser) modification. T56 is a binding site for substrate. The Proton donor role is filled by Y57. 72 to 74 is a substrate binding site; it reads GAA.

The protein belongs to the PanD family. Heterooctamer of four alpha and four beta subunits. Requires pyruvate as cofactor. In terms of processing, is synthesized initially as an inactive proenzyme, which is activated by self-cleavage at a specific serine bond to produce a beta-subunit with a hydroxyl group at its C-terminus and an alpha-subunit with a pyruvoyl group at its N-terminus.

It is found in the cytoplasm. It carries out the reaction L-aspartate + H(+) = beta-alanine + CO2. Its pathway is cofactor biosynthesis; (R)-pantothenate biosynthesis; beta-alanine from L-aspartate: step 1/1. Catalyzes the pyruvoyl-dependent decarboxylation of aspartate to produce beta-alanine. The chain is Aspartate 1-decarboxylase 1 from Mesorhizobium japonicum (strain LMG 29417 / CECT 9101 / MAFF 303099) (Mesorhizobium loti (strain MAFF 303099)).